The primary structure comprises 401 residues: Mu-type opioid receptor (401 aa).

The Extracellular portion of the chain corresponds to 1 to 69 (MDSSAVPANA…CPPTGSPSMI (69 aa)). N-linked (GlcNAc...) asparagine glycosylation is found at asparagine 9, asparagine 12, asparagine 34, asparagine 41, and asparagine 49. Residues 70–94 (TAITIMALYSIVCVVGLFGNFLVMY) traverse the membrane as a helical segment. Residues 95 to 107 (VIVRYTKMKTATN) are Cytoplasmic-facing. The chain crosses the membrane as a helical span at residues 108 to 132 (IYIFNLALADALATSTLPFQSVNYL). Residues 133 to 143 (MGTWPFGTILC) lie on the Extracellular side of the membrane. Cysteine 143 and cysteine 220 form a disulfide bridge. The chain crosses the membrane as a helical span at residues 144-166 (KIVISIDYYNMFTSIFTLCTMSV). Residues 167–186 (DRYIAVCHPVKALDFRTPRN) are Cytoplasmic-facing. A Phosphotyrosine modification is found at tyrosine 169. The chain crosses the membrane as a helical span at residues 187 to 208 (AKIINVCNWILSSAIGLPVMFM). Topologically, residues 209-231 (ATTKYRHGSIDCTLTFSHPTWYW) are extracellular. The chain crosses the membrane as a helical span at residues 232–256 (ENLLKICVFIFAFIMPVLIITVCYG). Residues 257-280 (LMILRLKSVRMLSGSKEKDRNLRR) are Cytoplasmic-facing. A helical membrane pass occupies residues 281-307 (ITRMVLVVVAVFIVCWTPIHIYVIIKA). The Extracellular segment spans residues 308–315 (LVTIPETT). The chain crosses the membrane as a helical span at residues 316-339 (FQTVSWHFCIALGYTNSCLNPVLY). Positions 335 to 339 (NPVLY) match the NPxxY; plays a role in stabilizing the activated conformation of the receptor motif. At 340–401 (AFLDENFKRC…NLEAETAPLP (62 aa)) the chain is on the cytoplasmic side. Cysteine 354 carries the S-palmitoyl cysteine lipid modification. The segment at 365–388 (NSTRIRQNTRDHPSTANTVDRTNH) is disordered. Serine 366 is subject to Phosphoserine. A Phosphothreonine modification is found at threonine 373. At serine 378 the chain carries Phosphoserine. Threonine 397 is subject to Phosphothreonine.

This sequence belongs to the G-protein coupled receptor 1 family. Forms homooligomers and heterooligomers with other GPCRs, such as OPRD1, OPRK1, OPRL1, NPFFR2, ADRA2A, SSTR2, CNR1 and CCR5 (probably in dimeric forms). Interacts with heterotrimeric G proteins; interaction with a heterotrimeric complex containing GNAI1, GNB1 and GNG2 stabilizes the active conformation of the receptor and increases its affinity for endomorphin-2, the synthetic opioid peptide DAMGO and for morphinan agonists. Interacts with PPL; the interaction disrupts agonist-mediated G-protein activation. Interacts (via C-terminus) with DNAJB4 (via C-terminus). Interacts with calmodulin; the interaction inhibits the constitutive activity of OPRM1; it abolishes basal and attenuates agonist-stimulated G-protein coupling. Interacts with FLNA, PLD2, RANBP9 and WLS and GPM6A. Interacts with RTP4. Interacts with SYP and GNAS. Interacts with RGS9, RGS17, RGS20, RGS4, PPP1R9B and HINT1. Post-translationally, phosphorylated. Differentially phosphorylated in basal and agonist-induced conditions. Agonist-mediated phosphorylation modulates receptor internalization. Phosphorylated by GRK2 in a agonist-dependent manner. Phosphorylation at Tyr-169 requires receptor activation, is dependent on non-receptor protein tyrosine kinase Src and results in a decrease in agonist efficacy by reducing G-protein coupling efficiency. Phosphorylated on tyrosine residues; the phosphorylation is involved in agonist-induced G-protein-independent receptor down-regulation. Phosphorylation at Ser-378 is involved in G-protein-dependent but not beta-arrestin-dependent activation of the ERK pathway. Ubiquitinated. A basal ubiquitination seems not to be related to degradation. Ubiquitination is increased upon formation of OPRM1:OPRD1 oligomers leading to proteasomal degradation; the ubiquitination is diminished by RTP4.

It is found in the cell membrane. The protein resides in the cell projection. Its subcellular location is the axon. It localises to the perikaryon. The protein localises to the dendrite. It is found in the endosome. Its function is as follows. Receptor for endogenous opioids such as beta-endorphin and endomorphin. Receptor for natural and synthetic opioids including morphine, heroin, DAMGO, fentanyl, etorphine, buprenorphin and methadone. Also activated by enkephalin peptides, such as Met-enkephalin or Met-enkephalin-Arg-Phe, with higher affinity for Met-enkephalin-Arg-Phe. Agonist binding to the receptor induces coupling to an inactive GDP-bound heterotrimeric G-protein complex and subsequent exchange of GDP for GTP in the G-protein alpha subunit leading to dissociation of the G-protein complex with the free GTP-bound G-protein alpha and the G-protein beta-gamma dimer activating downstream cellular effectors. The agonist- and cell type-specific activity is predominantly coupled to pertussis toxin-sensitive G(i) and G(o) G alpha proteins, GNAI1, GNAI2, GNAI3 and GNAO1, and to a lesser extent to pertussis toxin-insensitive G alpha proteins GNAZ and GNA15. They mediate an array of downstream cellular responses, including inhibition of adenylate cyclase activity and both N-type and L-type calcium channels, activation of inward rectifying potassium channels, mitogen-activated protein kinase (MAPK), phospholipase C (PLC), phosphoinositide/protein kinase (PKC), phosphoinositide 3-kinase (PI3K) and regulation of NF-kappa-B. Also couples to adenylate cyclase stimulatory G alpha proteins. The selective temporal coupling to G-proteins and subsequent signaling can be regulated by RGSZ proteins, such as RGS9, RGS17 and RGS4. Phosphorylation by members of the GPRK subfamily of Ser/Thr protein kinases and association with beta-arrestins is involved in short-term receptor desensitization. Beta-arrestins associate with the GPRK-phosphorylated receptor and uncouple it from the G-protein thus terminating signal transduction. The phosphorylated receptor is internalized through endocytosis via clathrin-coated pits which involves beta-arrestins. The activation of the ERK pathway occurs either in a G-protein-dependent or a beta-arrestin-dependent manner and is regulated by agonist-specific receptor phosphorylation. Acts as a class A G-protein coupled receptor (GPCR) which dissociates from beta-arrestin at or near the plasma membrane and undergoes rapid recycling. Receptor down-regulation pathways are varying with the agonist and occur dependent or independent of G-protein coupling. Endogenous ligands induce rapid desensitization, endocytosis and recycling. Heterooligomerization with other GPCRs can modulate agonist binding, signaling and trafficking properties. Involved in neurogenesis. The protein is Mu-type opioid receptor (OPRM1) of Pan troglodytes (Chimpanzee).